A 328-amino-acid chain; its full sequence is MKKIAVYTSGGDAPGMNACIRAAVRAGHYHNLEVYGIVRGYDGMINGNFIELDNRAVSNIIQKGGTILKSARSEEFRSPEGRRKAFDQIQKFGIDGLVAIGGNGTFTGAELFYNEYQIPCVGAPGTIDNDLYGSDFTIGYDTAVNTCLAAIDKIRDTADAHERVFFIEVMGRDTGYIAVRSAISGGAEMAIIPEFPYDKNVVINRLKHGTSDTKASHIIIVAEGHQEGRASMIARDIKEALPQLDCRVTTLGHVQRGGGPSAADRVLASRLGLATVEGLLEGRANVMAGIIDHKVVYTPFIDTITKRKPINEDLLSLAEKLNGRSYKV.

G11 contacts ATP. Position 21–25 (21–25 (RAAVR)) interacts with ADP. ATP contacts are provided by residues 72 to 73 (RS) and 102 to 105 (GNGT). Residue N103 coordinates Mg(2+). 126–128 (TID) contacts substrate. D128 acts as the Proton acceptor in catalysis. R155 contacts ADP. Residues R163 and 170–172 (MGR) each bind substrate. ADP contacts are provided by residues 186–188 (GAE) and 214–216 (KAS). Substrate-binding positions include E223, R247, and 253–256 (HVQR).

The protein belongs to the phosphofructokinase type A (PFKA) family. ATP-dependent PFK group I subfamily. Prokaryotic clade 'B1' sub-subfamily. As to quaternary structure, homotetramer. Mg(2+) serves as cofactor.

It is found in the cytoplasm. It carries out the reaction beta-D-fructose 6-phosphate + ATP = beta-D-fructose 1,6-bisphosphate + ADP + H(+). The protein operates within carbohydrate degradation; glycolysis; D-glyceraldehyde 3-phosphate and glycerone phosphate from D-glucose: step 3/4. With respect to regulation, allosterically activated by ADP and other diphosphonucleosides, and allosterically inhibited by phosphoenolpyruvate. Functionally, catalyzes the phosphorylation of D-fructose 6-phosphate to fructose 1,6-bisphosphate by ATP, the first committing step of glycolysis. This is ATP-dependent 6-phosphofructokinase from Cytophaga hutchinsonii (strain ATCC 33406 / DSM 1761 / CIP 103989 / NBRC 15051 / NCIMB 9469 / D465).